The primary structure comprises 592 residues: Prospero homeobox protein 2 (592 aa).

Disordered regions lie at residues 20 to 56 (EACT…PEWF), 85 to 129 (GNAQ…RKGG), 155 to 218 (KPRD…LPSG), 308 to 336 (RLDS…PLTA), and 353 to 382 (RYNN…LRPW). Basic residues predominate over residues 95-106 (CPKKARERKRKQ). Residues 201 to 211 (SGAEKHQESEK) show a composition bias toward basic and acidic residues. A compositionally biased stretch (pro residues) spans 314–331 (YPIPPRMTPKPCQDPPAN). Over residues 360 to 377 (SSSPPQDSSSQRHPSSEP) the composition is skewed to low complexity. A Prospero-type homeo domain is found at 437–495 (QEGLNPGHLKKAKLMFFFTRYPSSNLLKVYFPDVQFNRCITSQMIKWFSNFREFYYIQM). The tract at residues 437–592 (QEGLNPGHLK…EIFKSSSYPQ (156 aa)) is homeo-Prospero. Positions 496-592 (EKSARQAISD…EIFKSSSYPQ (97 aa)) constitute a Prospero domain.

It belongs to the Prospero homeodomain family.

Its subcellular location is the nucleus. Its function is as follows. Transcription regulator. Does not seem to be essential for embryonic development and postnatal survival. In Homo sapiens (Human), this protein is Prospero homeobox protein 2 (PROX2).